The primary structure comprises 762 residues: 5-methyltetrahydropteroyltriglutamate--homocysteine methyltransferase (762 aa).

5-methyltetrahydropteroyltri-L-glutamate-binding positions include 17-20 (REWK) and K111. L-homocysteine contacts are provided by residues 435-437 (IGS) and E488. Residues 435–437 (IGS) and E488 contribute to the L-methionine site. 5-methyltetrahydropteroyltri-L-glutamate-binding positions include 519–520 (RC) and W565. D603 provides a ligand contact to L-homocysteine. An L-methionine-binding site is contributed by D603. E609 serves as a coordination point for 5-methyltetrahydropteroyltri-L-glutamate. Residues H645, C647, and E669 each coordinate Zn(2+). H698 functions as the Proton donor in the catalytic mechanism. Position 730 (C730) interacts with Zn(2+).

Belongs to the vitamin-B12 independent methionine synthase family. The cofactor is Zn(2+).

The catalysed reaction is 5-methyltetrahydropteroyltri-L-glutamate + L-homocysteine = tetrahydropteroyltri-L-glutamate + L-methionine. It participates in amino-acid biosynthesis; L-methionine biosynthesis via de novo pathway; L-methionine from L-homocysteine (MetE route): step 1/1. Functionally, catalyzes the transfer of a methyl group from 5-methyltetrahydrofolate to homocysteine resulting in methionine formation. The sequence is that of 5-methyltetrahydropteroyltriglutamate--homocysteine methyltransferase from Bacillus thuringiensis (strain Al Hakam).